A 102-amino-acid polypeptide reads, in one-letter code: Small ribosomal subunit protein uS10 (102 aa).

Belongs to the universal ribosomal protein uS10 family. As to quaternary structure, part of the 30S ribosomal subunit.

Involved in the binding of tRNA to the ribosomes. The protein is Small ribosomal subunit protein uS10 of Geotalea daltonii (strain DSM 22248 / JCM 15807 / FRC-32) (Geobacter daltonii).